Reading from the N-terminus, the 817-residue chain is Putative receptor protein kinase ZmPK1 (817 aa).

Positions 1-28 are cleaved as a signal peptide; it reads MPRPLAALLSTACILSFFIALFPRAASS. Residues 29–158 form the Bulb-type lectin domain; that stretch reads RDILPLGSSL…GGNTVWQSFD (130 aa). At 29–472 the chain is on the extracellular side; that stretch reads RDILPLGSSL…HKTGGGESKW (444 aa). N-linked (GlcNAc...) asparagine glycans are attached at residues Asn83, Asn128, Asn228, and Asn279. In terms of domain architecture, EGF-like spans 292 to 328; sequence MTQPCNIHGLCGPNGICHYSPTPTCSCPPGYATRNPG. Cystine bridges form between Cys296–Cys308 and Cys302–Cys316. N-linked (GlcNAc...) asparagine glycosylation is found at Asn329 and Asn339. The region spanning 342–424 is the PAN domain; sequence CDRYDKRSMR…VRTIYLKLPT (83 aa). 2 disulfides stabilise this stretch: Cys376/Cys398 and Cys384/Cys386. N-linked (GlcNAc...) asparagine glycosylation occurs at Asn452. The chain crosses the membrane as a helical span at residues 473–498; it reads FYFYGFIAAFFVVEVSFISFAWFFVL. At 499 to 817 the chain is on the cytoplasmic side; sequence KRELRPSELW…AVQTLLSADD (319 aa). A Protein kinase domain is found at 534-817; sequence RKFKVELGRG…AVQTLLSADD (284 aa). Residues 540 to 548 and Lys562 contribute to the ATP site; that span reads LGRGESGTV. The active-site Proton acceptor is the Asp658.

The protein belongs to the protein kinase superfamily. Ser/Thr protein kinase family. Expressed predominantly in the shoots and roots of young maize seedlings, and to a lesser extent in the silks.

Its subcellular location is the membrane. It carries out the reaction L-seryl-[protein] + ATP = O-phospho-L-seryl-[protein] + ADP + H(+). It catalyses the reaction L-threonyl-[protein] + ATP = O-phospho-L-threonyl-[protein] + ADP + H(+). Functionally, probable receptor. Interaction with a ligand in the extracellular domain triggers the protein kinase activity of the cytoplasmic domain. The chain is Putative receptor protein kinase ZmPK1 (PK1) from Zea mays (Maize).